Reading from the N-terminus, the 26-residue chain is Mucus envelope protein (26 aa).

Post-translationally, glycosylated. Produced by the opercular gland in the gill cavity and secreted as part of the mucus cocoon.

The protein localises to the secreted. In terms of biological role, exhibits antibacterial activity. May play a role in protection against parasite settlement. This Scarus vetula (Queen parrotfish) protein is Mucus envelope protein.